The following is a 331-amino-acid chain: Pantothenate kinase (331 aa).

109 to 116 (GSVAVGKS) contributes to the ATP binding site.

This sequence belongs to the prokaryotic pantothenate kinase family.

The protein resides in the cytoplasm. It catalyses the reaction (R)-pantothenate + ATP = (R)-4'-phosphopantothenate + ADP + H(+). It participates in cofactor biosynthesis; coenzyme A biosynthesis; CoA from (R)-pantothenate: step 1/5. In Rhizobium etli (strain CIAT 652), this protein is Pantothenate kinase.